The following is a 448-amino-acid chain: Homogentisate 1,2-dioxygenase (448 aa).

Residue histidine 303 is the Proton acceptor of the active site. 2 residues coordinate Fe cation: histidine 346 and glutamate 352. Homogentisate-binding residues include tyrosine 361 and histidine 382. Fe cation is bound at residue histidine 382.

It belongs to the homogentisate dioxygenase family. As to quaternary structure, hexamer; dimer of trimers. It depends on Fe cation as a cofactor.

The enzyme catalyses homogentisate + O2 = 4-maleylacetoacetate + H(+). It participates in amino-acid degradation; L-phenylalanine degradation; acetoacetate and fumarate from L-phenylalanine: step 4/6. Functionally, involved in the catabolism of homogentisate (2,5-dihydroxyphenylacetate or 2,5-OH-PhAc), a central intermediate in the degradation of phenylalanine and tyrosine. Catalyzes the oxidative ring cleavage of the aromatic ring of homogentisate to yield maleylacetoacetate. In Rhodopseudomonas palustris (strain BisB5), this protein is Homogentisate 1,2-dioxygenase.